The chain runs to 555 residues: GPI-anchor transamidase component PIGS (555 aa).

Over 2 to 18 (ATAGAAATDLEVVRGKR) the chain is Cytoplasmic. A cardiolipin-binding residues include R15 and R18. Residues 19-39 (AALFFAAVAILLGLPLWWKTT) traverse the membrane as a helical segment. Residues 40-517 (ETYRAPLPYS…LHLLYFPDDQ (478 aa)) lie on the Lumenal side of the membrane. N267 and N370 each carry an N-linked (GlcNAc...) asparagine glycan. A helical transmembrane segment spans residues 518–532 (KFAIYIPLFLPMAVP). Over 533-555 (ILLSLVKIFLETHKSWKKPEKID) the chain is Cytoplasmic.

It belongs to the PIGS family. As to quaternary structure, heteropentamer. Part of the GPI-anchor transamidase complex, consisting of PIGK, PIGT, PIGS, PIGU and GAA1.

Its subcellular location is the endoplasmic reticulum membrane. It functions in the pathway glycolipid biosynthesis; glycosylphosphatidylinositol-anchor biosynthesis. Functionally, component of the glycosylphosphatidylinositol-anchor (GPI-anchor) transamidase (GPI-T) complex that catalyzes the formation of the linkage between a proprotein and a GPI-anchor and participates in GPI anchored protein biosynthesis. The chain is GPI-anchor transamidase component PIGS from Rattus norvegicus (Rat).